Consider the following 144-residue polypeptide: Large ribosomal subunit protein uL11 (144 aa).

Belongs to the universal ribosomal protein uL11 family. As to quaternary structure, part of the ribosomal stalk of the 50S ribosomal subunit. Interacts with L10 and the large rRNA to form the base of the stalk. L10 forms an elongated spine to which L12 dimers bind in a sequential fashion forming a multimeric L10(L12)X complex. One or more lysine residues are methylated.

Its function is as follows. Forms part of the ribosomal stalk which helps the ribosome interact with GTP-bound translation factors. The chain is Large ribosomal subunit protein uL11 from Deinococcus geothermalis (strain DSM 11300 / CIP 105573 / AG-3a).